The sequence spans 194 residues: HTH-type nicotine-responsive transcriptional repressor HdnoR (194 aa).

The region spanning 6–66 (VDRRQQLIDA…AAAAELLQQL (61 aa)) is the HTH tetR-type domain. A DNA-binding region (H-T-H motif) is located at residues 29-48 (SLRTIASEAKASLAAVHVCF).

Homodimer.

Its activity is regulated as follows. 6-hydroxy-D-nicotine and 6-hydroxy-L-nicotine prevent HdnoR from binding to the IR1 DNA. Both 6-hydroxy-nicotine enantiomers prevent DNA-protein complex formation at micromolar concentrations, with the D-enantiomer being twice as potent as the L-enantiomer. A thousand-fold higher L-nicotine concentration is required to elicit a similar effect. Its function is as follows. Represses expression of the 6-hydroxy-D-nicotine oxidase (6-hdno). Acts by binding to a gene operator site consisting of two inverted repeats, IR1 (covering the 6-hdno promoter region) and IR2 (situated upstream from the 6-hdno promoter). Binding to one site may stimulate binding of the protein to the second site. The polypeptide is HTH-type nicotine-responsive transcriptional repressor HdnoR (Paenarthrobacter nicotinovorans (Arthrobacter nicotinovorans)).